The following is a 248-amino-acid chain: DNA repair protein RecO (248 aa).

The protein belongs to the RecO family.

Its function is as follows. Involved in DNA repair and RecF pathway recombination. In Bacillus mycoides (strain KBAB4) (Bacillus weihenstephanensis), this protein is DNA repair protein RecO.